A 312-amino-acid polypeptide reads, in one-letter code: MSNSIVIQTSSTVIEDMKQQYKQALSPKIPQGGIFMAKVPSCTITAYKSGKVMFQGGRAEAEASRWQTVSQTPKSTVKKSVNSHQYAPPSSIGTMSILGSDEVGTGDYFGPMTVVAVYVDAKQIPLLKELGVKDSKNLNDAQIAEIAKQLLHVVPYSSLVLHNEKYNELFDKGNNQGKLKALLHNKAITNLLAKIAPTKPEGILIDQFTQPDTYYKYLAKQKQVQRENVYFATKGESVHLAVAAASILARYSFVKQFDELSKKAGMQLPKGAGKQVDIAAAKLIQKVGKERLPEFVKVHFANTEKAFRLLKK.

The region spanning 95–312 (MSILGSDEVG…TEKAFRLLKK (218 aa)) is the RNase H type-2 domain. A divalent metal cation is bound by residues aspartate 101, glutamate 102, and aspartate 206.

This sequence belongs to the RNase HII family. RnhC subfamily. The cofactor is Mn(2+). Requires Mg(2+) as cofactor.

The protein resides in the cytoplasm. The enzyme catalyses Endonucleolytic cleavage to 5'-phosphomonoester.. In terms of biological role, endonuclease that specifically degrades the RNA of RNA-DNA hybrids. The polypeptide is Ribonuclease HIII (Bacillus mycoides (strain KBAB4) (Bacillus weihenstephanensis)).